Here is a 68-residue protein sequence, read N- to C-terminus: Tau-scoloptoxin(04)-Ssm1b (68 aa).

Residues Met1–Gly25 form the signal peptide. A propeptide spanning residues Glu26–Arg36 is cleaved from the precursor. 2 disulfides stabilise this stretch: Cys45-Cys56 and Cys50-Cys63. A highly charged C-terminal region, binds to TRPV1 channel region spans residues Arg55 to Glu67.

This sequence belongs to the scoloptoxin-04 family. In terms of tissue distribution, expressed by the venom gland.

It localises to the secreted. Its function is as follows. Extremely potent agonist and potentiator of TRPV1 (EC(50)=470-521.5 nM (mouse)). It strongly promotes the heat activation process by downshifting the activation threshold temperature. It preferably binds to the activated channel and promotes its opening. Holding the channel closed by cooling prevents binding of this toxin, leaving it ineffective. The toxin binds to the charge-rich outer pore region of the channel where it directly interacts with the pore helix and turret, two adjacent structural elements known to be critical for activation gating of TRPV1. In comparison with Sm1b, induces a TRPV1 desensitization with slower kinetics (20 seconds). In vivo, induces pain in mice after intraplantar injection. Potent agonist and probable potentiator of TRPV1 (EC(50)=38.35 uM (mouse)). Also binds to the outer pore region of TRPV1. In comparison with Sm1a, induces a TRPV1 desensitization with faster kinetics (2 seconds) and leads to a more complete TRPV1 desensitization. Desensitization is achieved by reducing both the open probability and the single-channel conductance upon prolonged exposure. The chain is Tau-scoloptoxin(04)-Ssm1b from Scolopendra mutilans (Chinese red-headed centipede).